Consider the following 407-residue polypeptide: Na(+)-translocating NADH-quinone reductase subunit F (407 aa).

A helical membrane pass occupies residues 3–23 (IILGVVMFTLIVLALVLVILF). The 95-residue stretch at 32–126 (GDITISINGD…DMDIELPEEI (95 aa)) folds into the 2Fe-2S ferredoxin-type domain. [2Fe-2S] cluster contacts are provided by cysteine 69, cysteine 75, cysteine 78, and cysteine 110. The FAD-binding FR-type domain maps to 129 to 269 (VKKWECTVIS…SGPFGEFFAK (141 aa)). The tract at residues 272-389 (DAEMVFIGGG…PMMNAAVIGM (118 aa)) is catalytic.

The protein belongs to the NqrF family. Composed of six subunits; NqrA, NqrB, NqrC, NqrD, NqrE and NqrF. [2Fe-2S] cluster is required as a cofactor. Requires FAD as cofactor.

The protein resides in the cell inner membrane. It carries out the reaction a ubiquinone + n Na(+)(in) + NADH + H(+) = a ubiquinol + n Na(+)(out) + NAD(+). Functionally, NQR complex catalyzes the reduction of ubiquinone-1 to ubiquinol by two successive reactions, coupled with the transport of Na(+) ions from the cytoplasm to the periplasm. The first step is catalyzed by NqrF, which accepts electrons from NADH and reduces ubiquinone-1 to ubisemiquinone by a one-electron transfer pathway. The protein is Na(+)-translocating NADH-quinone reductase subunit F of Vibrio anguillarum (Listonella anguillarum).